Reading from the N-terminus, the 45-residue chain is Major cold shock protein (45 aa).

In terms of domain architecture, CSD spans 1-45 (EKGFGFISTENGQDVFAHFSAIQTNGFKTLEEGQKVEFDVEEGQR).

In terms of assembly, homodimer.

Its subcellular location is the cytoplasm. This chain is Major cold shock protein (cspA), found in Streptococcus dysgalactiae.